Here is a 61-residue protein sequence, read N- to C-terminus: Large ribosomal subunit protein uL30 (61 aa).

This sequence belongs to the universal ribosomal protein uL30 family. As to quaternary structure, part of the 50S ribosomal subunit.

In Corynebacterium glutamicum (strain R), this protein is Large ribosomal subunit protein uL30.